The chain runs to 267 residues: Probable ribosomal RNA small subunit methyltransferase A (267 aa).

5 residues coordinate S-adenosyl-L-methionine: Leu-12, Gly-37, Glu-58, Asp-83, and Asn-100.

Belongs to the class I-like SAM-binding methyltransferase superfamily. rRNA adenine N(6)-methyltransferase family. RsmA subfamily.

It localises to the cytoplasm. In terms of biological role, specifically dimethylates two adjacent adenosines in the loop of a conserved hairpin near the 3'-end of 16S rRNA in the 30S particle. May play a critical role in biogenesis of 30S subunits. This is Probable ribosomal RNA small subunit methyltransferase A from Methanococcus vannielii (strain ATCC 35089 / DSM 1224 / JCM 13029 / OCM 148 / SB).